The sequence spans 206 residues: MQLELLNDQGQAASKIDVPETVFDRQYNEDLIHQIVVAYRANARQGTRAQKDREQVRHSTKKPFKQKGTGNARAGMTSSPLWRGGGRIFPNLPEENFTQKINKKMYRAGMASILSQLAREGRLAVVDSLKVETPKTKVLADKFKAMNLQSVMVISDEVDENLYLASRNLKNVFVVEPRYADPVSLVHYKKVLVTKGAIDKLKEMFA.

Residues 46-77 are disordered; the sequence is GTRAQKDREQVRHSTKKPFKQKGTGNARAGMT.

Belongs to the universal ribosomal protein uL4 family. Part of the 50S ribosomal subunit.

One of the primary rRNA binding proteins, this protein initially binds near the 5'-end of the 23S rRNA. It is important during the early stages of 50S assembly. It makes multiple contacts with different domains of the 23S rRNA in the assembled 50S subunit and ribosome. In terms of biological role, forms part of the polypeptide exit tunnel. The polypeptide is Large ribosomal subunit protein uL4 (Paracidovorax citrulli (strain AAC00-1) (Acidovorax citrulli)).